Reading from the N-terminus, the 402-residue chain is Fugralins biosynthesis cluster protein 2 (402 aa).

5 helical membrane-spanning segments follow: residues 28–48 (NCLA…CFLL), 109–129 (ILIF…AILV), 145–165 (IFWW…TAIV), 232–252 (VIFG…AVTV), and 264–284 (LAPL…IVCV). 2 disordered regions span residues 312–335 (NPNT…TGPK) and 378–402 (TQDN…PWGV). Positions 324–334 (TKGSQLSSTGP) are enriched in polar residues. The N-linked (GlcNAc...) asparagine glycan is linked to Asn381.

Belongs to the SAT4 family.

It is found in the membrane. It functions in the pathway secondary metabolite biosynthesis. Its function is as follows. Part of the gene cluster that mediates the biosynthesis of the tetraketides fugralins such as linear fugralin A and cyclic fugralin B, volatile compounds that play a role in the asexual reproductive cycle but are not involved in pathogenicity. One of the key features of fugralins is the presence of a double methyl group, which is only rarely encountered in fungal secondary metabolites. As the fugralins cluster does not contain an independent methyltransferase, the PKS FGR1 is probably responsible for adding two methyl groups to the same carbon atom. Fugralin B is similar to fugralin A except for a cyclization between the carboxylic acid C-8 and the alcohol on C-4 resulting in a six membered lactone ring, probably catalyzed by the cyclase FGR4. The exact role of the individual cluster genes remains unknown and further work is needed to unravel the biosynthetic pathway. The polypeptide is Fugralins biosynthesis cluster protein 2 (Gibberella zeae (strain ATCC MYA-4620 / CBS 123657 / FGSC 9075 / NRRL 31084 / PH-1) (Wheat head blight fungus)).